Reading from the N-terminus, the 407-residue chain is Acetate kinase (407 aa).

N10 lines the Mg(2+) pocket. K17 contributes to the ATP binding site. R91 serves as a coordination point for substrate. D150 acts as the Proton donor/acceptor in catalysis. ATP contacts are provided by residues 210–214 (HLGNG), 285–287 (DCR), and 338–342 (GIGEN). Position 392 (E392) interacts with Mg(2+).

It belongs to the acetokinase family. As to quaternary structure, homodimer. Mg(2+) serves as cofactor. The cofactor is Mn(2+).

It is found in the cytoplasm. It carries out the reaction acetate + ATP = acetyl phosphate + ADP. The protein operates within metabolic intermediate biosynthesis; acetyl-CoA biosynthesis; acetyl-CoA from acetate: step 1/2. Functionally, catalyzes the formation of acetyl phosphate from acetate and ATP. Can also catalyze the reverse reaction. This chain is Acetate kinase, found in Mannheimia succiniciproducens (strain KCTC 0769BP / MBEL55E).